The sequence spans 1124 residues: MSWLSRLNPRGPGTRTGRHAAPSSPCTADPETCLMVFENHWRQVSGVLKQRESSVGGFADDLTAVRNHTDQMLCLLAEERPAGGDIDSPAMGPILEMVVAENILEELVQWHVCRGLDPDSQLELLKLFEMLIGQSHQPLLLHSAVLQPLLSLLGACVDPQMGCPPALESSLVLLLNQVCVSMAKETAVLELLFRCGSVQQGPTNLLIFSLLVPFIHRDGALGQQARDALLLVMATSASNHAVARHITENSYFCPVLATGLSGLYSSLPRKIEVRGDDWHALRREDWIGVSSLVLFMNSLEFCNAVVQVAHPLVRCQLLDYLHNGFLVPVMGPALHKSSVDEMIASTAYLDLFLRCITETSLLKTFLRFILLHHHDNDTILDTLLTRISSNSRLCMVSLSLFKTLLSLNCEDLMLQLVLRYLLPCTHVMLSQRRAVRETDLYGKSADKFLSLIPECCRITSAPSGERDEEPAFWGKVLGSPTSESPVHPRPSTPSRLALFIRQQSSGGQANPSSSGSENAPSSPRGSVSSPLSPDSPMHQLSDFSEGETGYLEYLRDARKGIELCSWGCRDWSAPYDGENPSPNSAPLPPPPPTSNPSLSMVQEHFSVMDPTQQRAAVVAAARAEWSSSDRDSGEWDVTISKNCISLTPRSKKRSLLPSSIPLQSSSSASVSTEITGASETVYQHSRSTPHPALYNGMGQVEFTDSVDERMEAKKVKRDSDVNSGMVETGMNGSMGPVDYNDFHVGSTLKSSQVQLKPHLQHHTSVPSSTQECLPTESHRLSPVLGLTESSAASRGSESVERLIEELLERAPSEPLSGDSKCQGISIEAFHQELRELEERVRERRVSSRSSEESSRESRTAPLPSLTDEDCLPVETEQRSSETKPDSSTTGVFSPARPLGQPLAQPYTGPFITVLFSKLENMMQNSLYVNILLTGVVFQLACYPQPLLRSFLLNANMVFQPSVKSLIQVLGTVKNRIEVFAAAHEDFPAMLRKARRFLVARGKLDWSDSAMGVPSLRRSDSLIKSRKPSLGDLILRHTNSPTRARHAAQLALAHVRDGGQSLHSALFRGSAASGASGLEKQAEALRVKNAVYCAVIFSEFLKELAALAQEHAVALPFPPSQGTEE.

5 disordered regions span residues 1–25 (MSWLSRLNPRGPGTRTGRHAAPSSP), 461–542 (APSG…QLSD), 577–599 (GENPSPNSAPLPPPPPTSNPSLS), 713–732 (KKVKRDSDVNSGMVETGMNG), and 838–900 (ERVR…PLGQ). A compositionally biased stretch (low complexity) spans 509–532 (ANPSSSGSENAPSSPRGSVSSPLS). Residues 583–594 (NSAPLPPPPPTS) show a composition bias toward pro residues. Composition is skewed to basic and acidic residues over residues 838–858 (ERVRERRVSSRSSEESSRESR) and 875–884 (TEQRSSETKP).

This sequence belongs to the FHIP family. Component of the FTS/Hook/FHIP complex (FHF complex), composed of AKTIP/FTS, FHIP1B, and one or more members of the Hook family of proteins HOOK1, HOOK2, and HOOK3. The FHF complex associates with the homotypic vesicular sorting complex (the HOPS complex).

Its function is as follows. Component of the FTS/Hook/FHIP complex (FHF complex). The FHF complex may function to promote vesicle trafficking and/or fusion via the homotypic vesicular protein sorting complex (the HOPS complex). FHF complex promotes the distribution of AP-4 complex to the perinuclear area of the cell. This is FHF complex subunit HOOK-interacting protein 1B (fhip1b) from Danio rerio (Zebrafish).